The sequence spans 546 residues: CTP synthase (546 aa).

An amidoligase domain region spans residues 1–266; sequence MTTRYIFVTG…DELVVKRFSL (266 aa). S14 lines the CTP pocket. A UTP-binding site is contributed by S14. Residues 15 to 20 and D72 each bind ATP; that span reads SLGKGI. Residues D72 and E140 each coordinate Mg(2+). CTP is bound by residues 147-149, 187-192, and K223; these read DIE and KTKPTQ. UTP contacts are provided by residues 187–192 and K223; that span reads KTKPTQ. An ATP-binding site is contributed by 239–241; sequence KDV. The Glutamine amidotransferase type-1 domain occupies 291–542; it reads VIGMVGKYIE…VAAASAHQKR (252 aa). Residue G352 participates in L-glutamine binding. Residue C379 is the Nucleophile; for glutamine hydrolysis of the active site. Residues 380 to 383, E403, and R470 contribute to the L-glutamine site; that span reads LGMQ. Catalysis depends on residues H515 and E517.

This sequence belongs to the CTP synthase family. Homotetramer.

The catalysed reaction is UTP + L-glutamine + ATP + H2O = CTP + L-glutamate + ADP + phosphate + 2 H(+). It catalyses the reaction L-glutamine + H2O = L-glutamate + NH4(+). It carries out the reaction UTP + NH4(+) + ATP = CTP + ADP + phosphate + 2 H(+). The protein operates within pyrimidine metabolism; CTP biosynthesis via de novo pathway; CTP from UDP: step 2/2. With respect to regulation, allosterically activated by GTP, when glutamine is the substrate; GTP has no effect on the reaction when ammonia is the substrate. The allosteric effector GTP functions by stabilizing the protein conformation that binds the tetrahedral intermediate(s) formed during glutamine hydrolysis. Inhibited by the product CTP, via allosteric rather than competitive inhibition. Functionally, catalyzes the ATP-dependent amination of UTP to CTP with either L-glutamine or ammonia as the source of nitrogen. Regulates intracellular CTP levels through interactions with the four ribonucleotide triphosphates. This Shewanella oneidensis (strain ATCC 700550 / JCM 31522 / CIP 106686 / LMG 19005 / NCIMB 14063 / MR-1) protein is CTP synthase.